The sequence spans 344 residues: uncharacterized protein (344 aa).

Positions 95-344 (TINPEDANED…TPAKKNSKGR (250 aa)) are disordered. Residues 103 to 123 (EDAKVKNSLKLEKEEGSDEKS) are compositionally biased toward basic and acidic residues. Over residues 135–155 (SDDESDNSNDSEESEAEDSDQ) the composition is skewed to acidic residues. Positions 191–200 (SAKNAKASKP) are enriched in low complexity. Over residues 244–259 (SEDEDSGSDNSEEESE) the composition is skewed to acidic residues. Residues 265-276 (ASSKKPPSKSSK) show a composition bias toward basic residues. Residues 281 to 314 (EDEDEDSGQSESEHSEEESNSDEDSGQSEEESEE) show a composition bias toward acidic residues. Residues 331–344 (TAKKTPAKKNSKGR) show a composition bias toward basic residues.

This is an uncharacterized protein from Acanthamoeba polyphaga (Amoeba).